Consider the following 853-residue polypeptide: DNA mismatch repair protein MutS (853 aa).

An ATP-binding site is contributed by Gly-614–Ser-621.

It belongs to the DNA mismatch repair MutS family.

Its function is as follows. This protein is involved in the repair of mismatches in DNA. It is possible that it carries out the mismatch recognition step. This protein has a weak ATPase activity. This Escherichia coli O81 (strain ED1a) protein is DNA mismatch repair protein MutS.